A 663-amino-acid chain; its full sequence is UvrABC system protein B (663 aa).

One can recognise a Helicase ATP-binding domain in the interval 26–183; it reads DGLESGLAKQ…KRLAEMQYTR (158 aa). Residue 39-46 participates in ATP binding; that stretch reads GVTGSGKT. The Beta-hairpin motif lies at 92–115; that stretch reads YYDYYQPEAYVPASDTFIEKDASI. A Helicase C-terminal domain is found at 430-596; sequence QVDDLMSEIR…GINKSVEDIL (167 aa). The UVR domain occupies 624–659; the sequence is AKQINALEKQMYAHAQNMEFELAAKIRDEYLLLKEQ.

It belongs to the UvrB family. In terms of assembly, forms a heterotetramer with UvrA during the search for lesions. Interacts with UvrC in an incision complex.

The protein localises to the cytoplasm. The UvrABC repair system catalyzes the recognition and processing of DNA lesions. A damage recognition complex composed of 2 UvrA and 2 UvrB subunits scans DNA for abnormalities. Upon binding of the UvrA(2)B(2) complex to a putative damaged site, the DNA wraps around one UvrB monomer. DNA wrap is dependent on ATP binding by UvrB and probably causes local melting of the DNA helix, facilitating insertion of UvrB beta-hairpin between the DNA strands. Then UvrB probes one DNA strand for the presence of a lesion. If a lesion is found the UvrA subunits dissociate and the UvrB-DNA preincision complex is formed. This complex is subsequently bound by UvrC and the second UvrB is released. If no lesion is found, the DNA wraps around the other UvrB subunit that will check the other stand for damage. The polypeptide is UvrABC system protein B (Legionella pneumophila (strain Corby)).